The following is a 106-amino-acid chain: ATP-dependent Clp protease adapter protein ClpS (106 aa).

Belongs to the ClpS family. Binds to the N-terminal domain of the chaperone ClpA.

Involved in the modulation of the specificity of the ClpAP-mediated ATP-dependent protein degradation. The sequence is that of ATP-dependent Clp protease adapter protein ClpS from Escherichia fergusonii (strain ATCC 35469 / DSM 13698 / CCUG 18766 / IAM 14443 / JCM 21226 / LMG 7866 / NBRC 102419 / NCTC 12128 / CDC 0568-73).